The following is a 339-amino-acid chain: Cilia- and flagella-associated protein 36 (339 aa).

2 coiled-coil regions span residues 142–188 and 255–330; these read ISDL…ENKQ and NLSQ…EVIL. 2 disordered regions span residues 177 to 212 and 281 to 318; these read NLTL…EKQP and KKQE…QRRK. Over residues 187 to 200 the composition is skewed to polar residues; that stretch reads KQSSGSERTPNNTE. Basic and acidic residues predominate over residues 281-313; the sequence is KKQESKKMAQNSEEHEEKATCSKQEMTEEEKKS.

The protein belongs to the CFAP36 family.

The protein resides in the nucleus. It localises to the cytoplasm. It is found in the cell projection. Its subcellular location is the cilium. The protein localises to the flagellum. The protein is Cilia- and flagella-associated protein 36 of Xenopus tropicalis (Western clawed frog).